We begin with the raw amino-acid sequence, 323 residues long: Aldo-keto reductase family 1 member C4 (323 aa).

NADP(+) contacts are provided by residues 20-24 and Asp-50; that span reads GFGSY. The active-site Proton donor is the Tyr-55. His-117 contributes to the substrate binding site. Residues 166–167, Gln-190, 216–221, and 270–280 each bind NADP(+); these read SN, HSALGT, and KSYNEQRIREN.

The protein belongs to the aldo/keto reductase family. As to quaternary structure, monomer. In terms of tissue distribution, high expression in liver. Also expressed in kidney.

It localises to the cytoplasm. It is found in the cytosol. It carries out the reaction chlordecone alcohol + NADP(+) = chlordecone + NADPH + H(+). The catalysed reaction is a 3alpha-hydroxysteroid + NADP(+) = a 3-oxosteroid + NADPH + H(+). The enzyme catalyses a 3alpha-hydroxysteroid + NAD(+) = a 3-oxosteroid + NADH + H(+). It catalyses the reaction 5alpha-androstane-3alpha,17beta-diol + NADP(+) = 17beta-hydroxy-5alpha-androstan-3-one + NADPH + H(+). It carries out the reaction 5alpha-androstane-3beta,17beta-diol + NADP(+) = 17beta-hydroxy-5alpha-androstan-3-one + NADPH + H(+). The catalysed reaction is 5alpha-androstane-3alpha,17beta-diol + NAD(+) = 17beta-hydroxy-5alpha-androstan-3-one + NADH + H(+). The enzyme catalyses 17beta-estradiol + NADP(+) = estrone + NADPH + H(+). It catalyses the reaction 17beta-estradiol + NAD(+) = estrone + NADH + H(+). It carries out the reaction (20S)-hydroxypregn-4-en-3-one + NADP(+) = progesterone + NADPH + H(+). The catalysed reaction is (20S)-hydroxypregn-4-en-3-one + NAD(+) = progesterone + NADH + H(+). The enzyme catalyses androsterone + NADP(+) = 5alpha-androstan-3,17-dione + NADPH + H(+). It catalyses the reaction testosterone + NADP(+) = androst-4-ene-3,17-dione + NADPH + H(+). It carries out the reaction testosterone + NAD(+) = androst-4-ene-3,17-dione + NADH + H(+). The catalysed reaction is 3alpha-hydroxy-5alpha-androstane 17-O-(beta-D-glucuronate) + NADP(+) = 5alpha-dihydrotestosterone 17-O-(beta-D-glucuronate) + NADPH + H(+). The enzyme catalyses (3beta,5alpha,17beta)-3-hydroxy-androstan-17-yl sulfate + NADP(+) = 5alpha-dihydrotestosterone sulfate + NADPH + H(+). It catalyses the reaction 5alpha-androstane-3alpha,17beta-diol + NAD(+) = androsterone + NADH + H(+). Its pathway is steroid metabolism. With respect to regulation, potently inhibited by benzbromarone, 3',3'',5',5''-tetrabromophenolphthalein (TBPP) and o-cresolphthalein. Cytosolic aldo-keto reductase that catalyzes the NADH and NADPH-dependent reduction of ketosteroids to hydroxysteroids. Liver specific enzyme that acts as an NAD(P)(H)-dependent 3-, 17- and 20-ketosteroid reductase on the steroid nucleus and side chain. Displays the ability to catalyze both oxidation and reduction in vitro, but most probably acts as a reductase in vivo since the oxidase activity measured in vitro is inhibited by physiological concentration of NADPH. Acts preferentially as a 3-alpha-hydroxysteroid dehydrogenase (HSD) with a subsidiary 3-beta-HSD activity. Catalyzes efficiently the transformation of the potent androgen 5-alpha-dihydrotestosterone (5alpha-DHT or 17beta-hydroxy-5alpha-androstan-3-one) into the less active form, 5-alpha-androstan-3-alpha,17-beta-diol (3-alpha-diol). Catalyzes the reduction of estrone into 17beta-estradiol but with low efficiency. Metabolizes a broad spectrum of natural and synthetic therapeutic steroid and plays an important role in metabolism of androgens, estrogens, progestereone and conjugated steroids. Catalyzes the biotransformation of the pesticide chlordecone (kepone) to its corresponding alcohol leading to increased biliary excretion of the pesticide and concomitant reduction of its neurotoxicity since bile is the major excretory route. The polypeptide is Aldo-keto reductase family 1 member C4 (AKR1C4) (Macaca fuscata fuscata (Japanese macaque)).